The primary structure comprises 306 residues: Glutaminase (306 aa).

7 residues coordinate substrate: Ser-64, Asn-115, Glu-159, Asn-166, Tyr-190, Tyr-242, and Val-260.

The protein belongs to the glutaminase family. As to quaternary structure, homotetramer.

It catalyses the reaction L-glutamine + H2O = L-glutamate + NH4(+). This is Glutaminase from Vibrio cholerae serotype O1 (strain ATCC 39315 / El Tor Inaba N16961).